Reading from the N-terminus, the 134-residue chain is D-ribose pyranase (134 aa).

His-20 acts as the Proton donor in catalysis. Substrate is bound by residues Asp-28, His-99, and 123-125; that span reads FSN.

This sequence belongs to the RbsD / FucU family. RbsD subfamily. In terms of assembly, homodecamer.

The protein resides in the cytoplasm. It carries out the reaction beta-D-ribopyranose = beta-D-ribofuranose. It functions in the pathway carbohydrate metabolism; D-ribose degradation; D-ribose 5-phosphate from beta-D-ribopyranose: step 1/2. Functionally, catalyzes the interconversion of beta-pyran and beta-furan forms of D-ribose. This chain is D-ribose pyranase, found in Staphylococcus carnosus (strain TM300).